The following is a 533-amino-acid chain: Large neutral amino acids transporter small subunit 2 (533 aa).

The tract at residues 1 to 33 (MEKGTRQRNNTAKNHPDRGSDTSPEAEASSGGG) is disordered. At 1–45 (MEKGTRQRNNTAKNHPDRGSDTSPEAEASSGGGGVALKKEIGLVS) the chain is on the cytoplasmic side. 4 positions are modified to phosphoserine: serine 20, serine 23, serine 29, and serine 30. A helical transmembrane segment spans residues 46–66 (ACGIIVGNIIGSGIFVSPKGV). Isoleucine 54 is an L-leucine binding site. The Extracellular segment spans residues 67-74 (LENAGSVG). Residues 75 to 96 (LALIVWIVTGVITAVGALCYAE) traverse the membrane as a helical segment. At 97 to 117 (LGVTIPKSGGDYSYVKDIFGG) the chain is on the cytoplasmic side. A helical transmembrane segment spans residues 118-150 (LAGFLRLWIAVLVIYPTNQAVIALTFSNYVLQP). Asparagine 135 provides a ligand contact to L-tryptophan. Over 151 to 158 (LFPTCFPP) the chain is Extracellular. A helical transmembrane segment spans residues 159-179 (ESGLRLLAAICLLLLTWVNCS). At 180–182 (SVR) the chain is on the cytoplasmic side. A helical transmembrane segment spans residues 183–211 (WATRVQDIFTAGKLLALALIIIMGVVQIC). Residues 212–231 (KGEFFWLEPKNAFENFQEPD) lie on the Extracellular side of the membrane. A helical transmembrane segment spans residues 232–253 (IGLVALAFLQGSFAYGGWNFLN). Glycine 247 contacts L-leucine. Topologically, residues 254 to 266 (YVTEELVDPYKNL) are cytoplasmic. The helical transmembrane segment at 267-288 (PRAIFISIPLVTFVYVFANIAY) threads the bilayer. The Extracellular segment spans residues 289 to 313 (VTAMSPQELLASNAVAVTFGEKLLG). Residues 314-339 (VMAWIMPISVALSTFGGVNGSLFTSS) form a helical membrane-spanning segment. The Cytoplasmic segment spans residues 340 to 365 (RLFFAGAREGHLPSVLAMIHVKRCTP). Residues 366-383 (IPALLFTCLSTLLMLVTS) traverse the membrane as a helical segment. Topologically, residues 384–387 (DMYT) are extracellular. Residues 388–409 (LINYVGFINYLFYGVTVAGQIV) traverse the membrane as a helical segment. Asparagine 396 contacts L-tryptophan. The Cytoplasmic portion of the chain corresponds to 410–424 (LRWKKPDIPRPIKIS). 2 consecutive transmembrane segments (helical) span residues 425 to 447 (LLFPIIYLLFWAFLLIFSLWSEP) and 448 to 467 (VVCGIGLAIMLTGVPVYFLG). Residues 468–533 (VYWQHKPKCF…VKDPDSEEQP (66 aa)) are Cytoplasmic-facing. The disordered stretch occupies residues 500–533 (GDSGTEETIDDVEEQHKPIFQPTPVKDPDSEEQP). Acidic residues predominate over residues 502-512 (SGTEETIDDVE). Serine 529 is modified (phosphoserine).

Belongs to the amino acid-polyamine-organocation (APC) superfamily. L-type amino acid transporter (LAT) (TC 2.A.3.8) family. As to quaternary structure, disulfide-linked heterodimer composed of the catalytic light chain subunit SLC7A8 and the heavy chain subunit SLC3A2. SLC3A2 acts as a chaperone for correct plasma membrane trafficking and stabilization of SLC7A8 and modulates the substrate affinity and specificity of SLC7A8. ICAM-1 associates with the heterodimer SLC3A2/SLC7A8; facilitates leucine uptake. As to expression, expression is seen in jejunum mucosa and the epithelial cells of the jejunum, ileum and colon, as well as in kidney, placenta, brain, testis and skeletal muscle. Expressed in retina, inner blood-retinal barrier of retina, retinal vascular endothelial cells. Also expressed in the intestinal epithelial cell line IEC-6 and in the retinal capillary endothelial cell line TR-iBRB2.

The protein localises to the cell membrane. It is found in the basolateral cell membrane. It carries out the reaction L-dopa(out) + L-phenylalanine(in) = L-dopa(in) + L-phenylalanine(out). The catalysed reaction is 3,3'-diiodo-L-thyronine(out) = 3,3'-diiodo-L-thyronine(in). It catalyses the reaction L-histidine(in) + L-phenylalanine(out) = L-histidine(out) + L-phenylalanine(in). The enzyme catalyses L-tryptophan(in) + L-phenylalanine(out) = L-tryptophan(out) + L-phenylalanine(in). It carries out the reaction L-isoleucine(in) + L-phenylalanine(out) = L-isoleucine(out) + L-phenylalanine(in). The catalysed reaction is L-valine(in) + L-phenylalanine(out) = L-valine(out) + L-phenylalanine(in). It catalyses the reaction L-leucine(in) + L-phenylalanine(out) = L-leucine(out) + L-phenylalanine(in). The enzyme catalyses L-glutamine(in) + L-phenylalanine(out) = L-glutamine(out) + L-phenylalanine(in). It carries out the reaction L-cysteine(in) + L-phenylalanine(out) = L-cysteine(out) + L-phenylalanine(in). The catalysed reaction is L-phenylalanine(out) + L-methionine(in) = L-phenylalanine(in) + L-methionine(out). It catalyses the reaction L-leucine(out) + L-methionine(in) = L-leucine(in) + L-methionine(out). The enzyme catalyses L-cysteine(out) + L-methionine(in) = L-cysteine(in) + L-methionine(out). It carries out the reaction S-methylmercury-L-cysteine(out) + L-methionine(in) = S-methylmercury-L-cysteine(in) + L-methionine(out). The catalysed reaction is S-methylmercury-L-cysteine(in) + L-leucine(out) = S-methylmercury-L-cysteine(out) + L-leucine(in). It catalyses the reaction S-methylmercury-L-cysteine(in) + L-phenylalanine(out) = S-methylmercury-L-cysteine(out) + L-phenylalanine(in). The enzyme catalyses L-phenylalanine(out) + L-serine(in) = L-phenylalanine(in) + L-serine(out). It carries out the reaction L-phenylalanine(out) + glycine(in) = L-phenylalanine(in) + glycine(out). The catalysed reaction is L-phenylalanine(out) + L-alanine(in) = L-phenylalanine(in) + L-alanine(out). It catalyses the reaction 3,3',5-triiodo-L-thyronine(out) = 3,3',5-triiodo-L-thyronine(in). With respect to regulation, leucine transport activity is inhibited by 2-amino-bicyclo-(2,2,1)-heptane-2-carboxylate (BCH), glycine, L-isomers of the neutral amino acids and histidine. Associates with SLC3A2 to form a functional heterodimeric complex that translocates small and large neutral amino acids with broad specificity and a stoichiometry of 1:1. Functions as amino acid antiporter mediating the influx of extracellular essential amino acids mainly in exchange with the efflux of highly concentrated intracellular amino acids. Has relatively symmetrical selectivities but strongly asymmetrical substrate affinities at both the intracellular and extracellular sides of the transporter. This asymmetry allows SLC7A8 to regulate intracellular amino acid pools (mM concentrations) by exchange with external amino acids (uM concentration range), equilibrating the relative concentrations of different amino acids across the plasma membrane instead of mediating their net uptake. May play an essential role in the reabsorption of neutral amino acids from the epithelial cells to the bloodstream in the kidney. Involved in the uptake of methylmercury (MeHg) when administered as the L-cysteine or D,L-homocysteine complexes, and hence plays a role in metal ion homeostasis and toxicity. Involved in the cellular activity of small molecular weight nitrosothiols, via the stereoselective transport of L-nitrosocysteine (L-CNSO) across the transmembrane. Imports the thyroid hormone diiodothyronine (T2) and to a smaller extent triiodothyronine (T3) but not rT 3 or thyroxine (T4). Mediates the uptake of L-DOPA. May participate in auditory function. In Rattus norvegicus (Rat), this protein is Large neutral amino acids transporter small subunit 2 (Slc7a8).